Reading from the N-terminus, the 165-residue chain is Endoribonuclease YbeY (165 aa).

Zn(2+) is bound by residues histidine 130, histidine 134, and histidine 140.

It belongs to the endoribonuclease YbeY family. Zn(2+) is required as a cofactor.

The protein localises to the cytoplasm. Its function is as follows. Single strand-specific metallo-endoribonuclease involved in late-stage 70S ribosome quality control and in maturation of the 3' terminus of the 16S rRNA. This chain is Endoribonuclease YbeY, found in Streptococcus pneumoniae serotype 2 (strain D39 / NCTC 7466).